We begin with the raw amino-acid sequence, 122 residues long: Fluoride-specific ion channel FluC 2 (122 aa).

The next 4 helical transmembrane spans lie at 3-23 (ITAI…RMFI), 38-58 (TSIV…LNLT), 62-82 (LLLL…SFIY), and 93-113 (FMHL…CFYL). Positions 72 and 75 each coordinate Na(+).

Belongs to the fluoride channel Fluc/FEX (TC 1.A.43) family.

It is found in the cell inner membrane. It carries out the reaction fluoride(in) = fluoride(out). Its activity is regulated as follows. Na(+) is not transported, but it plays an essential structural role and its presence is essential for fluoride channel function. Functionally, fluoride-specific ion channel. Important for reducing fluoride concentration in the cell, thus reducing its toxicity. The protein is Fluoride-specific ion channel FluC 2 of Prochlorococcus marinus (strain MIT 9312).